The chain runs to 218 residues: Cytochrome c biogenesis ATP-binding export protein CcmA (218 aa).

One can recognise an ABC transporter domain in the interval 2–217 (LEAKNLTCIR…KSCLSACCAV (216 aa)). 34 to 41 (GPNGAGKT) contributes to the ATP binding site.

This sequence belongs to the ABC transporter superfamily. CcmA exporter (TC 3.A.1.107) family. In terms of assembly, the complex is composed of two ATP-binding proteins (CcmA) and two transmembrane proteins (CcmB).

The protein resides in the cell inner membrane. The enzyme catalyses heme b(in) + ATP + H2O = heme b(out) + ADP + phosphate + H(+). Part of the ABC transporter complex CcmAB involved in the biogenesis of c-type cytochromes; once thought to export heme, this seems not to be the case, but its exact role is uncertain. Responsible for energy coupling to the transport system. This Yersinia pestis protein is Cytochrome c biogenesis ATP-binding export protein CcmA.